We begin with the raw amino-acid sequence, 254 residues long: Phosphoribosylaminoimidazole-succinocarboxamide synthase (254 aa).

The protein belongs to the SAICAR synthetase family.

The catalysed reaction is 5-amino-1-(5-phospho-D-ribosyl)imidazole-4-carboxylate + L-aspartate + ATP = (2S)-2-[5-amino-1-(5-phospho-beta-D-ribosyl)imidazole-4-carboxamido]succinate + ADP + phosphate + 2 H(+). It functions in the pathway purine metabolism; IMP biosynthesis via de novo pathway; 5-amino-1-(5-phospho-D-ribosyl)imidazole-4-carboxamide from 5-amino-1-(5-phospho-D-ribosyl)imidazole-4-carboxylate: step 1/2. The protein is Phosphoribosylaminoimidazole-succinocarboxamide synthase of Brucella anthropi (strain ATCC 49188 / DSM 6882 / CCUG 24695 / JCM 21032 / LMG 3331 / NBRC 15819 / NCTC 12168 / Alc 37) (Ochrobactrum anthropi).